Reading from the N-terminus, the 205-residue chain is Ras-related protein rab-6.1 (205 aa).

Residues 18-25, Thr43, 66-70, and 124-127 contribute to the GTP site; these read GEQSVGKT, DTAGQ, and NKTD. 2 S-geranylgeranyl cysteine lipidation sites follow: Cys203 and Cys205. A Cysteine methyl ester modification is found at Cys205.

It belongs to the small GTPase superfamily. Rab family. Interacts with GARP complex component vps-52. Highly expressed in body wall muscle, intestine, somatic gonad, distal tip cells, vulva, and neurons including AVB, AVD, RIG, and PVC (at protein level). Not expressed in AVA and RMDV neurons.

Its subcellular location is the cell membrane. The protein resides in the cell projection. The protein localises to the dendrite. It localises to the perikaryon. It is found in the golgi apparatus. Its subcellular location is the cytoplasmic vesicle. The protein resides in the secretory vesicle. The small GTPases Rab are key regulators of intracellular membrane trafficking, from the formation of transport vesicles to their fusion with membranes. Rabs cycle between an inactive GDP-bound form and an active GTP-bound form that is able to recruit to membranes different set of downstream effectors directly responsible for vesicle formation, movement, tethering and fusion. In its active GTP-bound form, acts redundantly with rab-6.2 (in its active GTP-bound form) to positively regulate the retrograde trafficking of cargo molecules from endosomes to Golgi structures. Required for the retrograde trafficking of glr-1, a subunit of AMPA-type glutamate receptors (AMPRs), out of early endosomes and into the Golgi compartment in neurons. Together with rab-6.2, promotes the retrograde trafficking of mig-14 from endosomes to Golgi structures in the intestine. In oocytes, in its active GTP-bound form, involved in the membrane fusion and exocytosis of secretory vesicles (cortical granules) to play a role in the remodeling of the embryo surface following fertilization. Recruits sep-1 to cortical granules (derived from the Golgi complex) for exocytosis during the oocyte-to-embryo transition. Required for seam cell division and alae formation. Promotes spontaneous reversals in locomotion. This Caenorhabditis elegans protein is Ras-related protein rab-6.1.